The chain runs to 256 residues: Thiazole synthase (256 aa).

K95 acts as the Schiff-base intermediate with DXP in catalysis. 1-deoxy-D-xylulose 5-phosphate contacts are provided by residues G156, 182–183 (AG), and 204–205 (NT).

This sequence belongs to the ThiG family. Homotetramer. Forms heterodimers with either ThiH or ThiS.

It localises to the cytoplasm. The catalysed reaction is [ThiS sulfur-carrier protein]-C-terminal-Gly-aminoethanethioate + 2-iminoacetate + 1-deoxy-D-xylulose 5-phosphate = [ThiS sulfur-carrier protein]-C-terminal Gly-Gly + 2-[(2R,5Z)-2-carboxy-4-methylthiazol-5(2H)-ylidene]ethyl phosphate + 2 H2O + H(+). Its pathway is cofactor biosynthesis; thiamine diphosphate biosynthesis. Functionally, catalyzes the rearrangement of 1-deoxy-D-xylulose 5-phosphate (DXP) to produce the thiazole phosphate moiety of thiamine. Sulfur is provided by the thiocarboxylate moiety of the carrier protein ThiS. In vitro, sulfur can be provided by H(2)S. This chain is Thiazole synthase, found in Escherichia coli O45:K1 (strain S88 / ExPEC).